A 474-amino-acid chain; its full sequence is Ribosomal RNA small subunit methyltransferase F (474 aa).

S-adenosyl-L-methionine-binding positions include 121–127 (ASAPGSK), E145, D172, and D190. C243 functions as the Nucleophile in the catalytic mechanism.

Belongs to the class I-like SAM-binding methyltransferase superfamily. RsmB/NOP family.

It localises to the cytoplasm. The catalysed reaction is cytidine(1407) in 16S rRNA + S-adenosyl-L-methionine = 5-methylcytidine(1407) in 16S rRNA + S-adenosyl-L-homocysteine + H(+). Functionally, specifically methylates the cytosine at position 1407 (m5C1407) of 16S rRNA. The polypeptide is Ribosomal RNA small subunit methyltransferase F (Shewanella piezotolerans (strain WP3 / JCM 13877)).